The sequence spans 128 residues: S-protein homolog 5 (128 aa).

The N-terminal stretch at 1-20 is a signal peptide; that stretch reads MEKVSIVCFFFFLLFGSGYG.

This sequence belongs to the plant self-incompatibility (S1) protein family.

It is found in the secreted. The chain is S-protein homolog 5 from Arabidopsis thaliana (Mouse-ear cress).